Here is a 1244-residue protein sequence, read N- to C-terminus: DNA polymerase beta (1244 aa).

13 tandem repeats follow at residues 1069-1072 (AGNP), 1073-1076 (AGNP), 1077-1080 (AGNP), 1081-1084 (AGNP), 1085-1088 (AGNP), 1089-1092 (AGNP), 1093-1096 (AGNP), 1097-1100 (AGNP), 1101-1104 (AGNP), 1105-1108 (AGNP), 1109-1112 (AGNP), 1113-1116 (AGNP), and 1117-1120 (AGNP). Residues 1069–1118 (AGNPAGNPAGNPAGNPAGNPAGNPAGNPAGNPAGNPAGNPAGNPAGNPAG) form a disordered region. The segment at 1069 to 1120 (AGNPAGNPAGNPAGNPAGNPAGNPAGNPAGNPAGNPAGNPAGNPAGNPAGNP) is 13 X 4 AA tandem repeats of A-G-N-P.

Belongs to the DNA polymerase type-B family.

It carries out the reaction DNA(n) + a 2'-deoxyribonucleoside 5'-triphosphate = DNA(n+1) + diphosphate. DNA-directed DNA polymerase involved in viral DNA replication. The protein is DNA polymerase beta (DPOL) of African swine fever virus (isolate Pig/Portugal/Lis 60/1960) (ASFV).